We begin with the raw amino-acid sequence, 344 residues long: Golgi-associated RAB2 interactor protein 1B (344 aa).

Belongs to the GARIN family.

The protein localises to the golgi apparatus. In terms of biological role, RAB2B effector protein required for accurate acrosome formation and normal male fertility. In complex with RAB2A/RAB2B, seems to suppress excessive vesicle trafficking during acrosome formation. In Rattus norvegicus (Rat), this protein is Golgi-associated RAB2 interactor protein 1B (Garin1b).